The chain runs to 318 residues: MTKDNEEKTYSEVEFLTVDGLKLRGRLYLGEANGPALVMAHGFNAVKEIVIPWAAEVFQKNGISVLLFDPRNYGESEGMPRQEVDPEKQIEDYFDAVTFLRQQPGIDPEAIGLWGVSTSGATAIGAACFDKRVRLIISVCPLIEATFREEMVPDVMAQIIREREALVAARTAGQQSPQPTLVPMINQVGVSPMGFNAIHGKNFYEEMPWFKETAPNFRPHTTTLTYYKMLRWHPLSNIRCLSPTPIQMLIPGKDDVCPTQEQLDFFEALPGPKRMEYYEDRNHHGLLLGSAFEGVMEAQVRFVQDVLAGKFALKSGSQ.

The protein belongs to the polyketide transferase af380 family.

The enzyme catalyses aculene D + L-prolyl-[peptidyl-carrier protein] = aculene B + holo-[peptidyl-carrier protein]. The catalysed reaction is aculene C + L-prolyl-[peptidyl-carrier protein] = aculene A + holo-[peptidyl-carrier protein]. The protein operates within secondary metabolite biosynthesis. Thiohydrolase; part of the gene cluster that mediates the biosynthesis of aculenes, a unique type of norsesquiterpenes that contain a nordaucane skeleton linked to an L-proline moiety and are of mixed biosynthetic origin. The pathway begins with the synthesis of dauca-4,7-diene by the terpene cyclase aneC using farnesyl pyrophosphate (FPP) as substrate. The cytochrome P450 monooxygenase aneF then performs the initial oxidation at C-12 of dauca-4,7-diene to yield asperaculane D. Asperaculane D is substrate of the cytochrome P450 monooxygenase aneD for C-10 hydroxylation to yield asperaculane E. The cytochrome P450 monooxygenase aneG then converts asperaculane E into aculene D via C-2 oxidation. The monomodular nonribosomal peptide synthtase aneB adenylates L-proline and the thiohydrolase aneE transfers this activated L-proline derivative to aculenes D and C to produce respectively aculenes B and A. The dioxygenase aneA converts aculene D into aculene C, and aculene B into aculene A by introducing the 5,6-alkene moiety. Asperculanes A, B, C and F, as well as 14-prolyl asperculane C, might be shunt products of the pathway. The sequence is that of Thiohydrolase aneE from Aspergillus aculeatus (strain ATCC 16872 / CBS 172.66 / WB 5094).